The following is a 597-amino-acid chain: Uptake hydrogenase large subunit (597 aa).

Cys-75, Cys-78, Cys-576, and Cys-579 together coordinate Ni(2+).

It belongs to the [NiFe]/[NiFeSe] hydrogenase large subunit family. As to quaternary structure, heterodimer of a large and a small subunit. Requires Ni(2+) as cofactor.

The protein resides in the cell membrane. The catalysed reaction is H2 + A = AH2. This enzyme recycles the H(2) produced by nitrogenase to increase the production of ATP and to protect nitrogenase against inhibition or damage by O(2) under carbon- or phosphate-limited conditions. This is Uptake hydrogenase large subunit (hupB) from Rhodobacter capsulatus (Rhodopseudomonas capsulata).